Reading from the N-terminus, the 510-residue chain is GTPase Der (510 aa).

2 consecutive EngA-type G domains span residues 4–168 (PVVA…AEKM) and 222–395 (IKIA…ACAT). Residues 10 to 17 (GRPNVGKS), 57 to 61 (DTGGI), 120 to 123 (NKTD), 228 to 235 (GRPNVGKS), 275 to 279 (DTAGV), and 340 to 343 (NKWD) contribute to the GTP site. The region spanning 396-480 (QKMTTSMLTR…PIRLLFQEGN (85 aa)) is the KH-like domain.

Belongs to the TRAFAC class TrmE-Era-EngA-EngB-Septin-like GTPase superfamily. EngA (Der) GTPase family. As to quaternary structure, associates with the 50S ribosomal subunit.

In terms of biological role, GTPase that plays an essential role in the late steps of ribosome biogenesis. This is GTPase Der from Pasteurella multocida (strain Pm70).